Reading from the N-terminus, the 509-residue chain is Seipin-3 (509 aa).

The interval 33-73 is disordered; it reads YDCLNSSPPANLRRRRLPMDTDSSSSSSTSSLESCEKRSTV. Residues 52–63 show a composition bias toward low complexity; sequence DTDSSSSSSTSS. A run of 2 helical transmembrane segments spans residues 238–258 and 455–475; these read LFCA…AFMI and LFVW…LVFF.

Belongs to the seipin family. In terms of tissue distribution, expressed in seeds, seedlings, leaves, stems and roots. Not detected in flowers.

The protein localises to the endoplasmic reticulum membrane. Its function is as follows. Involved in lipid metabolism and lipid droplet (LD) morphology, number, and size. Supports the formation of small-sized LDs and modulates triacylglycerol accumulation. Induces probably a reorganization of the endoplasmic reticulum into LD-forming domains. This chain is Seipin-3, found in Arabidopsis thaliana (Mouse-ear cress).